The sequence spans 429 residues: Xyloglucan O-acetyltransferase 1 (429 aa).

At M1–K20 the chain is on the cytoplasmic side. The chain crosses the membrane as a helical; Signal-anchor for type II membrane protein span at residues L21–P41. Over Y42 to E429 the chain is Lumenal. N-linked (GlcNAc...) asparagine glycans are attached at residues N46 and N89. 4 cysteine pairs are disulfide-bonded: C72/C122, C93/C158, C102/C402, and C317/C398. The GDS motif motif lies at G145 to S147. The Nucleophile role is filled by S147. 3 N-linked (GlcNAc...) asparagine glycosylation sites follow: N189, N263, and N351. The Proton donor role is filled by D397. The DXXH motif signature appears at D397–H400. H400 serves as the catalytic Proton acceptor.

Belongs to the PC-esterase family. TBL subfamily.

The protein resides in the golgi apparatus membrane. Its function is as follows. Xyloglucan acetyltransferase that catalyzes the acetylation of fucosylated Gal residues on xyloglucan side chains. Predominantly catalyze 6-O-monoacetylation of Gal residues in the Fuc-Gal-Xyl trisaccharide side chains of xyloglucan oligomers. The sequence is that of Xyloglucan O-acetyltransferase 1 from Populus trichocarpa (Western balsam poplar).